The chain runs to 94 residues: Small ribosomal subunit protein bS20 (94 aa).

It belongs to the bacterial ribosomal protein bS20 family.

Its function is as follows. Binds directly to 16S ribosomal RNA. The polypeptide is Small ribosomal subunit protein bS20 (Acaryochloris marina (strain MBIC 11017)).